A 135-amino-acid polypeptide reads, in one-letter code: Bacilliredoxin CHU_0972 (135 aa).

It belongs to the bacilliredoxin family.

In Cytophaga hutchinsonii (strain ATCC 33406 / DSM 1761 / CIP 103989 / NBRC 15051 / NCIMB 9469 / D465), this protein is Bacilliredoxin CHU_0972.